Reading from the N-terminus, the 365-residue chain is C-X-C chemokine receptor type 3 (365 aa).

Residues 1–57 are Extracellular-facing; that stretch reads MVPEMSERQVFQASELTYLLENCSSSYDYAENESDSCCASPPCPQDISLNFDRAFLP. A glycan (N-linked (GlcNAc...) asparagine) is linked at Asn22. A sulfotyrosine mark is found at Tyr27 and Tyr29. N-linked (GlcNAc...) asparagine glycosylation is present at Asn32. Residues 58–78 form a helical membrane-spanning segment; it reads ALYGLLFLLGLLGNGAVAAVL. Residues 79-88 lie on the Cytoplasmic side of the membrane; that stretch reads CSQRAARTST. A helical membrane pass occupies residues 89-109; the sequence is DTFLLHLAVADMLLVLTLPLW. Over 110–126 the chain is Extracellular; that stretch reads RVDTAVQWVFGSGLCKV. Cys124 and Cys203 form a disulfide bridge. A helical transmembrane segment spans residues 127–147; that stretch reads AGALFNINFYAGALLLACISF. Residues 148-169 are Cytoplasmic-facing; the sequence is DRYLSIVHATQPYRRGPPARVT. A helical membrane pass occupies residues 170–190; that stretch reads LTCVVVWGLCLFFAIPDFIFL. Over 191-223 the chain is Extracellular; it reads SANRDERLNAMHCRYNFPQVGRTALRGLQLVAG. Residues 224–244 form a helical membrane-spanning segment; sequence FLLPLLVMAYCYARILAVLLV. At 245 to 256 the chain is on the cytoplasmic side; it reads SRGQRRQRRMRL. The chain crosses the membrane as a helical span at residues 257–277; it reads VVVVVVAFALCWTPYHLVVLV. The Extracellular portion of the chain corresponds to 278 to 301; it reads DTLMDLGALDRNCGRESRVDVAKS. The chain crosses the membrane as a helical span at residues 302-322; it reads VTSGLGYMHCCLNPLLYAFVG. At 323–365 the chain is on the cytoplasmic side; it reads VKFRERMWMLLLRLGCPDHRGHQRHPTLSRRESSWSETPSTPR. Residues 342 to 365 form a disordered region; sequence RGHQRHPTLSRRESSWSETPSTPR.

This sequence belongs to the G-protein coupled receptor 1 family. Homomer. Forms heteromers with ACKR4. Interacts with PF4/CXCL4. In terms of processing, sulfation on Tyr-27 and Tyr-29 is essential for CXCL10 binding. Post-translationally, N-glycosylated.

The protein resides in the cell membrane. Functionally, receptor for the C-X-C chemokine CXCL9, CXCL10 and CXCL11 and mediates the proliferation, survival and angiogenic activity of mesangial cells through a heterotrimeric G-protein signaling pathway. Probably promotes cell chemotaxis response. Binds to CCL21. Upon activation by PF4, induces activated T-lymphocytes migration mediated via downstream Ras/extracellular signal-regulated kinase (ERK) signaling. The polypeptide is C-X-C chemokine receptor type 3 (CXCR3) (Canis lupus familiaris (Dog)).